The primary structure comprises 493 residues: 3-ketoacyl-CoA synthase 16 (493 aa).

The N-terminal stretch at M1 to A35 is a signal peptide. A helical transmembrane segment spans residues N52–T74. The FAE domain maps to Y71 to F366. Catalysis depends on residues C221, H300, H384, H388, H417, and N421.

Belongs to the thiolase-like superfamily. Chalcone/stilbene synthases family. In terms of tissue distribution, expressed in siliques.

Its subcellular location is the membrane. The catalysed reaction is a very-long-chain acyl-CoA + malonyl-CoA + H(+) = a very-long-chain 3-oxoacyl-CoA + CO2 + CoA. It participates in lipid metabolism; fatty acid biosynthesis. The protein is 3-ketoacyl-CoA synthase 16 of Arabidopsis thaliana (Mouse-ear cress).